The sequence spans 153 residues: Ribonuclease K6 (153 aa).

The N-terminal stretch at 1-27 (MVVDLPRYLPLLLLLELWEPMYLLCSQ) is a signal peptide. Residue His-41 is the Proton acceptor of the active site. 4 disulfide bridges follow: Cys-49-Cys-107, Cys-63-Cys-117, Cys-81-Cys-132, and Cys-88-Cys-95. Asn-58 carries an N-linked (GlcNAc...) asparagine glycan. 64 to 68 (KQINT) lines the substrate pocket. Residue Asn-85 is glycosylated (N-linked (GlcNAc...) asparagine). Residue Lys-89 coordinates substrate. The active-site Proton donor is His-148.

It belongs to the pancreatic ribonuclease family. Interacts (via N-terminus) with bacterial lipopolysaccharide (LPS). In terms of tissue distribution, highly expressed in spleen (at protein level). Has little or no expression in healthy kidneys (at protein level). Detected at high levels in infected kidneys (at protein level). Expressed at low levels in bladder. Also detected in skeletal muscle, heart and bone marrow.

The protein resides in the secreted. It is found in the lysosome. The protein localises to the cytoplasmic granule. In terms of biological role, ribonuclease which shows a preference for the pyrimidines uridine and cytosine. Has potent antibacterial activity against a range of Gram-positive and Gram-negative bacteria, including P.aeruginosa, A.baumanii, M.luteus, S.aureus, E.faecalis, E.faecium, S.saprophyticus and E.coli. Causes loss of bacterial membrane integrity, and also promotes agglutination of Gram-negative bacteria. Probably contributes to urinary tract sterility. Bactericidal activity is independent of RNase activity. This is Ribonuclease K6 (Rnase6) from Mus musculus (Mouse).